The sequence spans 451 residues: Molybdate-anion transporter (451 aa).

The next 12 membrane-spanning stretches (helical) occupy residues 1–21 (MLVT…VLEF), 45–65 (YDFY…GPYL), 79–99 (IAII…VSVP), 130–150 (FVLM…FSCF), 180–200 (NGGI…WLGL), 201–221 (GPAS…VLVI), 251–271 (VLLL…FIFL), 281–301 (APLG…SSLY), 316–336 (VLCL…FSTA), 346–366 (LLAF…MRFL), 378–398 (GVLN…LLVL), and 410–430 (MFSL…SLFT).

Belongs to the major facilitator superfamily.

It localises to the cell membrane. Mediates high-affinity intracellular uptake of the rare oligo-element molybdenum. The chain is Molybdate-anion transporter (mfsd5) from Xenopus laevis (African clawed frog).